We begin with the raw amino-acid sequence, 155 residues long: MDYEIRQAEKRNIAGFHMVGPWEKTVKQGFEQLMMWVDGNQVVPLEWIAVYYDNPDEVPAEKLRCDTVVSVPDNFTIPKNSEGVILTEIAGGQYATAVARVENHDFATPWYQFFNSLLQDNHYQIAAKPCFEVYLNNGTEDGYWDIEMYVPVQSK.

The protein belongs to the DNA gyrase inhibitor family. As to quaternary structure, interacts with DNA gyrase.

The protein localises to the cytoplasm. Functionally, inhibits the supercoiling activity of DNA gyrase. Acts by inhibiting DNA gyrase at an early step, prior to (or at the step of) binding of DNA by the gyrase. It protects cells against toxins that target DNA gyrase, by inhibiting activity of these toxins and reducing the formation of lethal double-strand breaks in the cell. The chain is DNA gyrase inhibitor from Citrobacter koseri (strain ATCC BAA-895 / CDC 4225-83 / SGSC4696).